The primary structure comprises 312 residues: Probable splicing factor, arginine/serine-rich 1 (312 aa).

In terms of domain architecture, RRM 1 spans 3–73 (ARIYIGRLTS…ERVILDYSKP (71 aa)). Disordered regions lie at residues 69–125 (DYSK…GRPY) and 196–312 (KMID…DGDN). Residues 74–90 (RGGGGDRGGFGGGGRGG) show a composition bias toward gly residues. The span at 103–121 (GRDRFDRYDRGPPRRESRY) shows a compositional bias: basic and acidic residues. Positions 129–202 (HRVVVENLSS…RKIKMIDDSQ (74 aa)) constitute an RRM 2 domain. Over residues 206 to 259 (SRSRSNSRSRSRSRSRDRRRSRSRSSSRSKSRSRSPPKRSRRESKSKSRSRSRS) the composition is skewed to basic residues.

The protein belongs to the splicing factor SR family. Post-translationally, extensively phosphorylated on serine residues in the RS domain.

The protein localises to the nucleus. Its function is as follows. Plays a functionally redundant role in spermatogenesis and growth rate control. This chain is Probable splicing factor, arginine/serine-rich 1 (rsp-1), found in Caenorhabditis elegans.